The chain runs to 217 residues: Elongation factor Ts (217 aa).

Positions 82–85 are involved in Mg(2+) ion dislocation from EF-Tu; it reads TDFV.

It belongs to the EF-Ts family.

It localises to the cytoplasm. In terms of biological role, associates with the EF-Tu.GDP complex and induces the exchange of GDP to GTP. It remains bound to the aminoacyl-tRNA.EF-Tu.GTP complex up to the GTP hydrolysis stage on the ribosome. The sequence is that of Elongation factor Ts from Desulforamulus reducens (strain ATCC BAA-1160 / DSM 100696 / MI-1) (Desulfotomaculum reducens).